The following is a 341-amino-acid chain: Cyclin-Y (341 aa).

Gly-2 carries N-myristoyl glycine lipidation. Ser-21 and Ser-25 each carry phosphoserine. A Phosphothreonine modification is found at Thr-30. At Ser-33 the chain carries Phosphoserine. Thr-37 is subject to Phosphothreonine. A Phosphothreonine; by CDK14 modification is found at Thr-67. Phosphoserine; by CDK14 occurs at positions 71 and 73. The residue at position 75 (Thr-75) is a Phosphothreonine. Ser-83 bears the Phosphoserine; by CDK14 mark. 3 positions are modified to phosphoserine: Ser-99, Ser-100, and Ser-102. The Cyclin N-terminal domain occupies 143–265 (DIFDENLHPL…FLELLQFNIN (123 aa)). The residue at position 280 (Ser-280) is a Phosphoserine. 2 positions are modified to phosphoserine; by CDK14: Ser-288 and Ser-295. Residues Ser-324 and Ser-326 each carry the phosphoserine modification. Thr-331 carries the post-translational modification Phosphothreonine.

This sequence belongs to the cyclin family. Cyclin Y subfamily. As to quaternary structure, found in a complex with CAPRIN2, LRP6 and CDK14 during G2/M stage; CAPRIN2 functions as a scaffold for the complex by binding to CCNY via its N terminus and to CDK14 via its C terminus. Interacts with CDK14. Interacts with CDK16. Interacts with LRP6. Ubiquitinated; leading to its degradation. In terms of processing, heavily phosphorylated. Phosphorylation at Ser-71 and Ser-73 by CDK14 is enhanced during the G2 and M cell cycle phases, and creates a phosphodegron triggering SCF-dependent ubiquitination. Widely expressed.

The protein localises to the cell membrane. It is found in the nucleus. Positive regulatory subunit of the cyclin-dependent kinases CDK14/PFTK1 and CDK16. Acts as a cell-cycle regulator of Wnt signaling pathway during G2/M phase by recruiting CDK14/PFTK1 to the plasma membrane and promoting phosphorylation of LRP6, leading to the activation of the Wnt signaling pathway. Recruits CDK16 to the plasma membrane. Isoform 3 might play a role in the activation of MYC-mediated transcription. This is Cyclin-Y (CCNY) from Homo sapiens (Human).